A 101-amino-acid chain; its full sequence is Chaperone modulatory protein CbpM (101 aa).

Belongs to the CbpM family.

In terms of biological role, interacts with CbpA and inhibits both the DnaJ-like co-chaperone activity and the DNA binding activity of CbpA. Together with CbpA, modulates the activity of the DnaK chaperone system. Does not inhibit the co-chaperone activity of DnaJ. This Pseudomonas putida (strain ATCC 47054 / DSM 6125 / CFBP 8728 / NCIMB 11950 / KT2440) protein is Chaperone modulatory protein CbpM.